Consider the following 277-residue polypeptide: Ubiquinone biosynthesis protein COQ4, mitochondrial (277 aa).

The transit peptide at 1 to 14 directs the protein to the mitochondrion; that stretch reads MLTKRALRTTDPYR. Zn(2+) is bound by residues His157, Asp158, His161, and Glu173.

It belongs to the COQ4 family. As to quaternary structure, component of a multi-subunit COQ enzyme complex, composed of at least COQ3, COQ4, COQ5, COQ6, COQ7 and COQ9. Zn(2+) is required as a cofactor.

The protein localises to the mitochondrion inner membrane. The enzyme catalyses a 4-hydroxy-3-methoxy-5-(all-trans-polyprenyl)benzoate + H(+) = a 2-methoxy-6-(all-trans-polyprenyl)phenol + CO2. It functions in the pathway cofactor biosynthesis; ubiquinone biosynthesis. In terms of biological role, lyase that catalyzes the C1-decarboxylation of 4-hydroxy-3-methoxy-5-(all-trans-polyprenyl)benzoic acid into 2-methoxy-6-(all-trans-polyprenyl)phenol during ubiquinone biosynthesis. The chain is Ubiquinone biosynthesis protein COQ4, mitochondrial from Ajellomyces capsulatus (strain NAm1 / WU24) (Darling's disease fungus).